The primary structure comprises 858 residues: Potassium transporter 7 (858 aa).

Acidic residues-rich tracts occupy residues 1–16 (MAEE…EEID) and 38–53 (QDDD…DNDG). The tract at residues 1–68 (MAEESSMEGS…LESDEDEIPE (68 aa)) is disordered. The Cytoplasmic segment spans residues 1–104 (MAEESSMEGS…DYEDLTVGRK (104 aa)). The chain crosses the membrane as a helical span at residues 105–125 (VLLAFQTLGVVFGDVGTSPLY). The Extracellular segment spans residues 126–147 (TFSVMFSKSPVQEKEDVIGALS). A helical transmembrane segment spans residues 148 to 168 (LVLYTLLLVPLIKYVLVVLWA). Residues 169–232 (NDDGEGGTFA…KLENSLILKK (64 aa)) lie on the Cytoplasmic side of the membrane. The chain crosses the membrane as a helical span at residues 233 to 253 (ILLVLVLAGTSMVIADGVVTP). The Extracellular segment spans residues 254–269 (AMSVMSAVGGLKVGVD). The chain crosses the membrane as a helical span at residues 270-290 (VVEQDQVVMISVAFLVILFSL). Residues 291 to 297 (QKYGTSK) lie on the Cytoplasmic side of the membrane. The helical transmembrane segment at 298–318 (MGLVVGPALLIWFCSLAGIGI) threads the bilayer. Residues 319–345 (YNLIKYDSSVYRAFNPVHIYYFFKRNS) are Extracellular-facing. The helical transmembrane segment at 346–366 (INAWYALGGCILCATGSEALF) threads the bilayer. Over 367-380 (ADLCYFSVRSVQLT) the chain is Cytoplasmic. Residues 381–401 (FVCLVLPCLMLGYMGQAAYLM) form a helical membrane-spanning segment. At 402–413 (ENHADASQAFFS) the chain is on the extracellular side. The helical transmembrane segment at 414 to 434 (SVPGSAFWPVLFIANIAALIA) threads the bilayer. The Cytoplasmic segment spans residues 435–470 (SRTMTTATFSCIKQSTALGCFPRLKIIHTSRKFMGQ). Residues 471-491 (IYIPVLNWFLLAVCLVVVCSI) traverse the membrane as a helical segment. Topologically, residues 492–496 (SSIDE) are extracellular. The helical transmembrane segment at 497 to 517 (IGNAYGMAELGVMMTTTILVT) threads the bilayer. Leucine 518 is a topological domain (cytoplasmic). Residues 519–539 (IMLLIWQINIVIVIAFLVVFL) form a helical membrane-spanning segment. The Extracellular portion of the chain corresponds to 540-552 (GVELVFFSSVIAS). The chain crosses the membrane as a helical span at residues 553–573 (VGDGSWIILVFAVIMFGIMYI). At 574–858 (WNYGSKLRYE…LMQVGMTYMV (285 aa)) the chain is on the cytoplasmic side. A disordered region spans residues 707 to 731 (QERSLESDGNDDSDSEEDFPGSRVV). Acidic residues predominate over residues 714–725 (DGNDDSDSEEDF). Phosphoserine is present on residues serine 719 and serine 721.

Belongs to the HAK/KUP transporter (TC 2.A.72.3) family.

The protein resides in the cell membrane. Functionally, probable potassium transporter. In Arabidopsis thaliana (Mouse-ear cress), this protein is Potassium transporter 7 (POT7).